We begin with the raw amino-acid sequence, 97 residues long: YcgL domain-containing protein PP_4590 (97 aa).

The region spanning 3 to 87 (RICSIYKSPR…LEDEYIEHLP (85 aa)) is the YcgL domain.

This Pseudomonas putida (strain ATCC 47054 / DSM 6125 / CFBP 8728 / NCIMB 11950 / KT2440) protein is YcgL domain-containing protein PP_4590.